We begin with the raw amino-acid sequence, 72 residues long: U-actitoxin-Aeq5b (72 aa).

Residues 1–20 (MNQVMTIFLVLGVIVYSVES) form the signal peptide. 4 disulfides stabilise this stretch: Cys33/Cys71, Cys37/Cys66, Cys44/Cys59, and Cys50/Cys56.

The protein belongs to the Acrorhagin I family. Expressed by acrorhagi.

Its subcellular location is the secreted. The protein localises to the nematocyst. Its function is as follows. Toxin that is lethal to crab. It interacts with divalent metal ions (zinc and nickel) suggesting it may function as a metal ion chelator to regulate metal ion levels or as a metal ion transporter, or that its function is modulated by metal ions. Is not active against any of the voltage-gated potassium and sodium channels tested. In addition, it does not show activity in bacterial and fungal growth inhibitory assays as well as in hemolytic assays. This chain is U-actitoxin-Aeq5b, found in Actinia equina (Beadlet anemone).